Here is a 143-residue protein sequence, read N- to C-terminus: Small ribosomal subunit protein uS12 (143 aa).

The segment covering 1 to 20 (MGKPRGLRTARKLKNHRREQ) has biased composition (basic residues). The interval 1-28 (MGKPRGLRTARKLKNHRREQRWHDKDYK) is disordered. Proline 62 bears the Hydroxyproline mark.

Belongs to the universal ribosomal protein uS12 family. Component of the 40S small ribosomal subunit.

The protein localises to the cytoplasm. Its subcellular location is the cytosol. It is found in the rough endoplasmic reticulum. The polypeptide is Small ribosomal subunit protein uS12 (RPS23) (Lumbricus rubellus (Humus earthworm)).